A 244-amino-acid chain; its full sequence is tRNA pseudouridine synthase A (244 aa).

Residue Asp-52 is the Nucleophile of the active site. Tyr-110 serves as a coordination point for substrate.

This sequence belongs to the tRNA pseudouridine synthase TruA family. As to quaternary structure, homodimer.

It catalyses the reaction uridine(38/39/40) in tRNA = pseudouridine(38/39/40) in tRNA. Its function is as follows. Formation of pseudouridine at positions 38, 39 and 40 in the anticodon stem and loop of transfer RNAs. The chain is tRNA pseudouridine synthase A from Clostridium botulinum (strain Alaska E43 / Type E3).